Reading from the N-terminus, the 378-residue chain is MSHVDDGFRSLTLKRFPQTDDVNPLLAWEAADEYLLQQLDETEIRGPVLILNDTFGALSCALAEHSPYSIGDSYLSELGTRENLRHNGIAESSVTFLDSTADYPQAPGVVLIKVPKTLALLEQQLRALRKVVTAQTRIIAGAKARDIHTSTLELFEKVLGPTTTTLAWKKARLINCTFSHPQLADAPQTLSWKLEDTGWTIHNHANVFSRTGLDIGARFFMQHLPENLDGEIVDLGCGNGVIGLSLLAKNPQANVVFVDESPMAVDSSRLNVETNLPEAFERCEFMINNALSGVEPFRFNAVFCNPPFHQKHALTDNIAWEMFHHARRCLKINGELYIVANRHLDYFHKLKKIFGNCATIATNNKFVILKAVKQGRRR.

Belongs to the methyltransferase superfamily. RlmG family.

Its subcellular location is the cytoplasm. The enzyme catalyses guanosine(1835) in 23S rRNA + S-adenosyl-L-methionine = N(2)-methylguanosine(1835) in 23S rRNA + S-adenosyl-L-homocysteine + H(+). In terms of biological role, specifically methylates the guanine in position 1835 (m2G1835) of 23S rRNA. The polypeptide is Ribosomal RNA large subunit methyltransferase G (Salmonella paratyphi A (strain ATCC 9150 / SARB42)).